Here is a 171-residue protein sequence, read N- to C-terminus: AAF/I fimbrial subunit (171 aa).

The first 28 residues, 1–28, serve as a signal peptide directing secretion; the sequence is MKTLKNMRRKNLCITLGLVSLLSRGANA.

The protein resides in the fimbrium. In Escherichia coli, this protein is AAF/I fimbrial subunit (aggA).